The chain runs to 344 residues: Axoneme-associated protein mst101(1) (344 aa).

12 repeat units span residues 74–89, 90–105, 106–121, 122–137, 138–153, 154–169, 170–185, 186–201, 202–217, 218–233, 234–249, and 250–265. The interval 74–344 is 17 X 16 AA approximate tandem repeats of K-K-K-C-X-E-X-A-[KQ]-K-X-X-E-X-A-X; the sequence is KKKCAEAAKK…AAQKKCEPKK (271 aa). The interval 206 to 244 is disordered; sequence KEAAEKKKCEERAKKEKEAAEKKKCEERAKKEKEAAEKK. The stretch at 266 to 281 is one 13; approximate repeat; it reads AQKKKCAELAKKAKEA. Residues 282 to 297 form a 14; approximate repeat; the sequence is AEKKKCAKKAGEKGSK. Residues 285–315 are compositionally biased toward basic and acidic residues; the sequence is KKCAKKAGEKGSKQSGSDKGKKNGKKNDMKN. Positions 285 to 318 are disordered; it reads KKCAKKAGEKGSKQSGSDKGKKNGKKNDMKNKCA. The 15; approximate repeat unit spans residues 298–313; sequence QSGSDKGKKNGKKNDM. Repeat 16 spans residues 314 to 329; the sequence is KNKCAMLAKKAKEEAL. One copy of the 17; truncated repeat lies at 330-344; that stretch reads KKKCAAAQKKCEPKK.

As to expression, testis. Located in spermatocytes and spermatid bundles.

It localises to the cytoplasm. In terms of biological role, possible structural role in the sperm tail. It is associated with axonemal structures. This chain is Axoneme-associated protein mst101(1) (mst101(1)), found in Drosophila hydei (Fruit fly).